Consider the following 529-residue polypeptide: UDP-glucuronosyltransferase 2B11 (529 aa).

The first 21 residues, 1 to 21, serve as a signal peptide directing secretion; sequence MTLKWTSVLLLIHLSCYFSSG. Lysine 135 carries the N6-succinyllysine modification. Asparagine 315 carries N-linked (GlcNAc...) asparagine glycosylation. A helical membrane pass occupies residues 493 to 513; it reads VIGFLLACVATVIFIITKFCL.

This sequence belongs to the UDP-glycosyltransferase family. As to expression, widely expressed.

It localises to the microsome membrane. The protein resides in the endoplasmic reticulum membrane. It catalyses the reaction glucuronate acceptor + UDP-alpha-D-glucuronate = acceptor beta-D-glucuronoside + UDP + H(+). In terms of biological role, UDPGT is of major importance in the conjugation and subsequent elimination of potentially toxic xenobiotics and endogenous compounds. The chain is UDP-glucuronosyltransferase 2B11 (UGT2B11) from Homo sapiens (Human).